The chain runs to 261 residues: Complex I assembly factor TIMMDC1, mitochondrial (261 aa).

3 helical membrane-spanning segments follow: residues 67 to 87 (LNSVYQAGFLGFLIGAIYGGV), 131 to 151 (WGWRVGLFTTSYFGIITCMSV), and 183 to 203 (AGGIIGGFLGGVAGVTSLLLM).

This sequence belongs to the Tim17/Tim22/Tim23 family. As to quaternary structure, associates with complex I assembly intermediates during its biogenesis in a NdufAF3 and NdufAF4 dependent manner.

The protein resides in the membrane. Functionally, chaperone protein involved in the assembly of the mitochondrial NADH:ubiquinone oxidoreductase complex (complex I). Essential for viability. The polypeptide is Complex I assembly factor TIMMDC1, mitochondrial (Drosophila melanogaster (Fruit fly)).